We begin with the raw amino-acid sequence, 281 residues long: Acyl-[acyl-carrier-protein]--UDP-N-acetylglucosamine O-acyltransferase (281 aa).

Belongs to the transferase hexapeptide repeat family. LpxA subfamily. In terms of assembly, homotrimer.

The protein localises to the cytoplasm. The catalysed reaction is a (3R)-hydroxyacyl-[ACP] + UDP-N-acetyl-alpha-D-glucosamine = a UDP-3-O-[(3R)-3-hydroxyacyl]-N-acetyl-alpha-D-glucosamine + holo-[ACP]. It participates in glycolipid biosynthesis; lipid IV(A) biosynthesis; lipid IV(A) from (3R)-3-hydroxytetradecanoyl-[acyl-carrier-protein] and UDP-N-acetyl-alpha-D-glucosamine: step 1/6. Functionally, involved in the biosynthesis of lipid A, a phosphorylated glycolipid that anchors the lipopolysaccharide to the outer membrane of the cell. The polypeptide is Acyl-[acyl-carrier-protein]--UDP-N-acetylglucosamine O-acyltransferase (Rickettsia bellii (strain OSU 85-389)).